Here is a 414-residue protein sequence, read N- to C-terminus: Peptide chain release factor subunit 1 (414 aa).

The protein belongs to the eukaryotic release factor 1 family. In terms of assembly, heterodimer of two subunits, one of which binds GTP.

It localises to the cytoplasm. Directs the termination of nascent peptide synthesis (translation) in response to the termination codons UAA, UAG and UGA. This chain is Peptide chain release factor subunit 1, found in Methanococcoides burtonii (strain DSM 6242 / NBRC 107633 / OCM 468 / ACE-M).